Reading from the N-terminus, the 59-residue chain is Cecropin-C type 2 (59 aa).

A signal peptide spans 1–23 (MNFAKVFVLVAMAVLLLVGQSEA).

This sequence belongs to the cecropin family.

Its subcellular location is the secreted. In terms of biological role, cecropins have lytic and antibacterial activity against several Gram-positive and Gram-negative bacteria. In Aedes albopictus (Asian tiger mosquito), this protein is Cecropin-C type 2 (CECC2).